A 444-amino-acid chain; its full sequence is MEYGHHARPDSKRPLDEGSPAAAGLTSKKANEALTRNRELTTVLVKNLPKSYNQNKVYKYFKHCGPIIHVDVADSLKKNFRFARIEFARYDGALAAITKTHKVVGQNEIIVSHLTECTLWMTNFPPSYTQRNIRDLLQDINVVALSIRLPSLRFNTSRRFAYIDVTSKEDARYCVEKLNGLKIEGYTLVTKVSNPLEKSKRTDSATLEGREIMIRNLSTELLDENLLRESFEGFGSIEKINIPAGQKEHSFNNCCAFMVFENKDSAERALQMNRSLLGNREISVSLADKKPFLERNEVKRLLASRNSKELETLICLFPLSDKVSPSLICQFLQEEIHINEKDIRKILLVSDFNGAIIIFRDSKFAAKMLMILNGSQFQGKVIRSGTINDMKRYYNNQQNHSMKHVKPSCINMMEKGPNLQVKKKIPDKQEQMSNDDFRKMFLGE.

Residues Met-1 to Asp-16 show a composition bias toward basic and acidic residues. Residues Met-1–Lys-29 form a disordered region. Residue Ser-19 is modified to Phosphoserine. RRM domains are found at residues Thr-41–Glu-116, Cys-117–Pro-195, and Arg-210–Lys-289.

Monomer. Interacts with U6 snRNA SNR6 and the LSM2-8 complex (small nuclear RNA); to chaperone formation of the U4/U6-U5 tri-snRNP (small nuclear ribonucleoprotein) assembly, the protein is displaced from the U4/U6 snRNP once pairing is complete.

The protein resides in the nucleus. Functionally, functions as a recycling factor of the spliceosome, a machinery that forms on each precursor-messenger RNA (pre-mRNA) and catalyzes the removal of introns. Chaperones the re-annealing of U4 and U6 snRNAs (small nuclear RNAs) released from previous rounds of splicing, an initial step in reforming the U4/U6-U5 tri-snRNP (small nuclear ribonucleoprotein) that can reassemble into another spliceosome complex; this step involves binding U6 and facilitating the unwinding of the U6 internal stem loop, followed by base-pairing of U6 to U4. The protein is U4/U6 snRNA-associated-splicing factor PRP24 (PRP24) of Saccharomyces cerevisiae (strain ATCC 204508 / S288c) (Baker's yeast).